The sequence spans 138 residues: Basic phospholipase A2 PLA-B' (138 aa).

The N-terminal stretch at 1–16 is a signal peptide; it reads MRTLWITAVLLVGVEG. Cystine bridges form between cysteine 42–cysteine 131, cysteine 44–cysteine 60, cysteine 59–cysteine 111, cysteine 65–cysteine 138, cysteine 66–cysteine 104, cysteine 73–cysteine 97, and cysteine 91–cysteine 102. Ca(2+) contacts are provided by tyrosine 43, glycine 45, and glycine 47. Histidine 63 is a catalytic residue. A Ca(2+)-binding site is contributed by aspartate 64. The active site involves aspartate 105.

It belongs to the phospholipase A2 family. Group II subfamily. D49 sub-subfamily. Requires Ca(2+) as cofactor. In terms of tissue distribution, expressed by the venom gland.

It is found in the secreted. The catalysed reaction is a 1,2-diacyl-sn-glycero-3-phosphocholine + H2O = a 1-acyl-sn-glycero-3-phosphocholine + a fatty acid + H(+). Its function is as follows. PLA2 catalyzes the calcium-dependent hydrolysis of the 2-acyl groups in 3-sn-phosphoglycerides. The protein is Basic phospholipase A2 PLA-B' of Protobothrops flavoviridis (Habu).